A 460-amino-acid chain; its full sequence is MKRRTDLDTKSSRKVYKKYEYTEIGSIEEENEASINFYAVVIDACFPYKVDEKKYMCYLKVIDTTHNVKEGDDNFAIVALQSRKFEDLPIIQRCGDIIRVHRAEYNYKDDQHYFKLNMSYSSSWALFSADEEVAPEVIKDEGDDFTYRSYAYSGKQYNFDTQDQKLLKNTRAWNKSYFAKNDVIIDEMYTPLSQARQEEGDFNVVGKVTQIVHRDYYTSDLRVKDTSKATWFLTVSRRKFPRLYEGVIIKIRSVNIDSETERERCLELAPHSNIMTFVPFSRLAKSLDSQISLSPDKVDKELIKKVILTEPVLATTTFGDYSELPLTELSEIFEDVTDKDAVFRARFSILKITPDRVEDYVEEYTPKGAPRSKPVYKVQFLIKDPSTALNDNLYKIYLYSHGDLGKEFFPGVDPSSAQTPSGHSKLRKYASTLMKFNVHIDAVLEKVGGAFFIRDTEMKF.

It belongs to the telombin family.

The protein localises to the nucleus. It is found in the chromosome. The protein resides in the telomere. Its function is as follows. May bind telomeric T4G4 sequences. This Euplotes crassus protein is Telomere-binding protein homolog.